The primary structure comprises 928 residues: MYCBP-associated protein (928 aa).

Disordered stretches follow at residues 1–38 (MKKA…PVSN) and 164–183 (EEPK…APPL). Residues 164-177 (EEPKPKSPKEEKRP) are compositionally biased toward basic and acidic residues. At serine 557 the chain carries Phosphoserine. Phosphothreonine is present on threonine 558. Serine 564 is subject to Phosphoserine. A disordered region spans residues 786–881 (IPDEGQKSPP…SSATSQEPID (96 aa)). The span at 806–865 (LGKEDRRGGAQEKKQLSARDKEEKKGSKTPSKEDRLNSKKQKAKDDKKVVKSTSRDRLLS) shows a compositional bias: basic and acidic residues.

In terms of assembly, interacts with MYCBP. In terms of tissue distribution, expressed in brain, retina, testis, heart and lung. Not detected in liver, kidney or intestine. In brain, highly abundant in CNS neurons of the hippocampus and cerebellum. Strongly expressed in cochlea and vestibular sensory epithelia. In both the organ of Corti and the vestibular organ, expression is restricted to hair cells.

The protein localises to the cytoplasm. The protein resides in the membrane. In terms of biological role, may play a role in spermatogenesis. May be involved in synaptic processes. This is MYCBP-associated protein from Rattus norvegicus (Rat).